Reading from the N-terminus, the 1059-residue chain is DNA (cytosine-5)-methyltransferase CMT1 (1059 aa).

2 disordered regions span residues M1 to A196 and C230 to R272. The segment covering A29 to D41 has biased composition (acidic residues). 3 stretches are compositionally biased toward basic and acidic residues: residues R42–A79, R92–A129, and S147–K157. Residues V158–A167 show a composition bias toward basic residues. A compositionally biased stretch (basic and acidic residues) spans R252–V262. Residues E312 to P436 enclose the BAH domain. The region spanning A479–E1017 is the SAM-dependent MTase C5-type domain. In terms of domain architecture, Chromo spans F584–L649. Residue C662 is part of the active site.

The protein belongs to the class I-like SAM-binding methyltransferase superfamily. C5-methyltransferase family.

The protein resides in the nucleus. The enzyme catalyses a 2'-deoxycytidine in DNA + S-adenosyl-L-methionine = a 5-methyl-2'-deoxycytidine in DNA + S-adenosyl-L-homocysteine + H(+). In terms of biological role, involved in CpXpG DNA methylation. May not play a major role in maintaining CpXpG methylation. The sequence is that of DNA (cytosine-5)-methyltransferase CMT1 from Oryza sativa subsp. japonica (Rice).